The following is a 182-amino-acid chain: MSYVPELKRHYKDNVIKELVSEFQYKSIMQAPKIEKIVVSMGVGDAVKNKKLLDSAISELSQITGQRAVKTKAKKAIAGFKIRQGQDIGAKVTLRGNIMYEFLYKLINLALPRVKDFRGVDGNAFDGNGNYSFGIAEQIIFSEIDYDKIERISGLNVTIVTTALNDKEGKALLSKFGMPFSN.

The protein belongs to the universal ribosomal protein uL5 family. Part of the 50S ribosomal subunit; part of the 5S rRNA/L5/L18/L25 subcomplex. Contacts the 5S rRNA and the P site tRNA. Forms a bridge to the 30S subunit in the 70S ribosome.

Functionally, this is one of the proteins that bind and probably mediate the attachment of the 5S RNA into the large ribosomal subunit, where it forms part of the central protuberance. In the 70S ribosome it contacts protein S13 of the 30S subunit (bridge B1b), connecting the 2 subunits; this bridge is implicated in subunit movement. Contacts the P site tRNA; the 5S rRNA and some of its associated proteins might help stabilize positioning of ribosome-bound tRNAs. This is Large ribosomal subunit protein uL5 from Borrelia hermsii (strain HS1 / DAH).